Consider the following 156-residue polypeptide: Ribosome maturation factor RimP (156 aa).

It belongs to the RimP family.

The protein resides in the cytoplasm. Required for maturation of 30S ribosomal subunits. This is Ribosome maturation factor RimP from Halalkalibacterium halodurans (strain ATCC BAA-125 / DSM 18197 / FERM 7344 / JCM 9153 / C-125) (Bacillus halodurans).